Reading from the N-terminus, the 2364-residue chain is MNLVNKAQLQKMAYVKFRIQEDEYVAILNALEEYHNMSESSVVEKYLKLKDINNLTDNYLNTYKKSGRNKALKKFKEYLTMEVLELKNNSLTPVEKNLHFIWIGGQINDTAINYINQWKDVNSDYTVKVFYDSNAFLINTLKKTIVESATNNTLESFRENLNDPEFDYNKFYRKRMEIIYDKQKHFIDYYKSQIEENPEFIIDNIIKTYLSNEYSKDLEALNKYIEESLNKITANNGNDIRNLEKFADEDLVRLYNQELVERWNLAAASDILRISMLKEDGGVYLDVDMLPGIQPDLFKSINKPDSITNTSWEMIKLEAIMKYKEYIPGYTSKNFDMLDEEVQRSFESALSSKSDKSEIFLPLDDIKVSPLEVKIAFANNSVINQALISLKDSYCSDLVINQIKNRYKILNDNLNPSINEGTDFNTTMKIFSDKLASISNEDNMMFMIKITNYLKVGFAPDVRSTINLSGPGVYTGAYQDLLMFKDNSTNIHLLEPELRNFEFPKTKISQLTEQEITSLWSFNQARAKSQFEEYKKGYFEGALGEDDNLDFAQNTVLDKDYVSKKILSSMKTRNKEYIHYIVQLQGDKISYEASCNLFSKDPYSSILYQKNIEGSETAYYYSVADAEIKEIDKYRIPYQISNKRKIKLTFIGHGKSEFNTDTFANLDVDSLSSEIETILNLAKADISPKYIEINLLGCNMFSYSISAEETYPGKLLLKIKDRVSELMPSISQDSITVSANQYEVRINEEGKREILDHSGKWINKEESIIKDISSKEYISFNPKENKIIVKSKYLHELSTLLQEIRNNANSSDIDLEKKVMLTECEINVASNIDRQIVEGRIEEAKNLTSDSINYIKNEFKLIESISDSLYDLKHQNGLDDSHFISFEDISKTENGFRIRFINKETGNSIFIETEKEIFSEYATHISKEISNIKDTIFDNVNGKLVKKVNLDAAHEVNTLNSAFFIQSLIEYNTTKESLSNLSVAMKVQVYAQLFSTGLNTITDASKVVELVSTALDETIDLLPTLSEGLPIIATIIDGVSLGAAIKELSETNDPLLRQEIEAKIGIMAVNLTAASTAIVTSALGIASGFSILLVPLAGISAGIPSLVNNELILQDKATKVIDYFKHISLAETEGAFTLLDDKIIMPQDDLVLSEIDFNNNSITLGKCEIWRAEGGSGHTLTDDIDHFFSSPSITYRKPWLSIYDVLNIKKEKIDFSKDLMVLPNAPNRVFGYEMGWTPGFRSLDNDGTKLLDRIRDHYEGQFYWRYFAFIADALITKLKPRYEDTNVRINLDGNTRSFIVPVITTEQIRKNLSYSFYGSGGSYSLSLSPYNMNIDLNLVENDTWVIDVDNVVKNITIESDEIQKGELIENILSKLNIEDNKIILNNHTINFYGDINESNRFISLTFSILEDINIIIEIDLVSKSYKILLSGNCMKLIENSSDIQQKIDHIGFNGEHQKYIPYSYIDNETKYNGFIDYSKKEGLFTAEFSNESIIRNIYMPDSNNLFIYSSKDLKDIRIINKGDVKLLIGNYFKDDMKVSLSFTIEDTNTIKLNGVYLDENGVAQILKFMNNAKSALNTSNSLMNFLESINIKNIFYNNLDPNIEFILDTNFIISGSNSIGQFELICDKDKNIQPYFIKFKIKETSYTLYVGNRQNLIVEPSYHLDDSGNISSTVINFSQKYLYGIDRYVNKVIIAPNLYTDEINITPVYKPNYICPEVIILDANYINEKINVNINDLSIRYVWDNDGSDLILIANSEEDNQPQVKIRFVNVFKSDTAADKLSFNFSDKQDVSVSKIISTFSLAAYSDGFFDYEFGLVSLDNDYFYINSFGNMVSGLIYINDSLYYFKPPKNNLITGFTTIDGNKYYFDPTKSGAASIGEITIDGKDYYFNKQGILQVGVINTSDGLKYFAPAGTLDENLEGESVNFIGKLNIDGKIYYFEDNYRAAVEWKLLDDETYYFNPKTGEALKGLHQIGDNKYYFDDNGIMQTGFITINDKVFYFNNDGVMQVGYIEVNGKYFYFGKNGERQLGVFNTPDGFKFFGPKDDDLGTEEGELTLYNGILNFNGKIYFFDISNTAVVGWGTLDDGSTYYFDDNTAEACIGLTVINDCKYYFDDNGIRQLGFITINDNIFYFSESGKIELGYQNINGNYFYIDESGLVLIGVFDTPDGYKYFAPLNTVNDNIYGQAVKYSGLVRVNEDVYYFGETYKIETGWIENETDKYYFDPETKKAYKGINVVDDIKYYFDENGIMRTGLISFENNNYYFNEDGKMQFGYLNIKDKMFYFGKDGKMQIGVFNTPDGFKYFAHQNTLDENFEGESINYTGWLDLDGKRYYFTDEYIAATGSLTIDGYNYYFDPDTAELVVSE.

The tract at residues 1 to 91 (MNLVNKAQLQ…EVLELKNNSL (91 aa)) is four-helical bundle. The GT44 domain maps to 96–468 (KNLHFIWIGG…APDVRSTINL (373 aa)). Residues 96 to 468 (KNLHFIWIGG…APDVRSTINL (373 aa)) form a glucosyltransferase region region. UDP-alpha-D-glucose-binding positions include 101–103 (IWI), N139, 265–270 (LAAASD), and 286–288 (DVD). Residues D288, E515, and S518 each contribute to the Mg(2+) site. 518-520 (SLW) is a binding site for UDP-alpha-D-glucose. The segment at 544-799 (GEDDNLDFAQ…KSKYLHELST (256 aa)) is autoprocessing region. 2 residues coordinate Zn(2+): E545 and D546. One can recognise a Peptidase C80 domain in the interval 567–774 (LSSMKTRNKE…EESIIKDISS (208 aa)). Residues Y577, K600, and K647 each contribute to the 1D-myo-inositol hexakisphosphate site. A Zn(2+)-binding site is contributed by H653. H653 (for protease activity) is an active-site residue. C698 functions as the Nucleophile; for protease activity in the catalytic mechanism. Zn(2+) is bound at residue H757. 3 residues coordinate 1D-myo-inositol hexakisphosphate: K764, K775, and K792. The translocation region stretch occupies residues 800–1500 (LLQEIRNNAN…ESIIRNIYMP (701 aa)). Interaction with host SEMA6A and SEMA6B regions lie at residues 1433-1438 (CMKLIE), 1466-1471 (DNETKY), 1484-1495 (FTAEFSNESIIR), 1504-1511 (NLFIYSSK), and 1596-1601 (YNNLDP). Cell wall-binding repeat units follow at residues 1813–1832 (EFGL…FGNM), 1833–1852 (VSGL…PKNN), 1854–1873 (ITGF…TKSG), 1876–1895 (SIGE…QGIL), 1926–1945 (FIGK…NYRA), 1946–1965 (AVEW…KTGE), 1967–1986 (LKGL…NGIM), 1987–2006 (QTGF…DGVM), 2007–2026 (QVGY…NGER), 2057–2076 (YNGI…SNTA), 2077–2097 (VVGW…NTAE), 2099–2118 (CIGL…NGIR), 2119–2138 (QLGF…SGKI), 2139–2158 (ELGY…SGLV), 2209–2224 (ETGW…YFDP), 2227–2249 (KKAY…NGIM), 2250–2269 (RTGL…DGKM), 2270–2289 (QFGY…DGKM), 2320–2339 (YTGW…EYIA), and 2340–2359 (ATGS…DTAE). The tract at residues 1835–2364 (GLIYINDSLY…PDTAELVVSE (530 aa)) is receptor-binding (CROPS) region.

Belongs to the clostridial glucosylating toxin (LCGT) family. As to quaternary structure, homomultimer; forms an inactive homomultimer at pH 8, which dissociates at pH 4, leading to cytotoxicity. Interacts with host SEMA6A; interaction promotes toxin entry into host cell. Interacts with host SEMA6B; interaction promotes toxin entry into host cell. Zn(2+) is required as a cofactor. It depends on Mn(2+) as a cofactor. Mg(2+) serves as cofactor. Undergoes autocatalytic cleavage to release the N-terminal part (Glucosyltransferase TcsL), which constitutes the active part of the toxin, in the host cytosol. 1D-myo-inositol hexakisphosphate-binding (InsP6) activates the peptidase C80 domain and promotes autoprocessing.

It localises to the secreted. The protein resides in the host endosome membrane. Its subcellular location is the host cytoplasm. It is found in the host cytosol. The protein localises to the host cell membrane. The catalysed reaction is L-threonyl-[protein] + UDP-alpha-D-glucose = 3-O-(alpha-D-glucosyl)-L-threonyl-[protein] + UDP + H(+). With respect to regulation, protease activity is activated upon binding to 1D-myo-inositol hexakisphosphate (InsP6), which induces conformational reorganization. Functionally, precursor of a cytotoxin that targets the vascular endothelium, inducing an anti-inflammatory effect and resulting in lethal toxic shock syndrome. TcsL constitutes the main toxin that mediates the pathology of P.sordellii infection, an anaerobic Gram-positive bacterium found in soil and in the gastrointestinal and vaginal tracts of animals and humans; although the majority of carriers are asymptomatic, pathogenic P.sordellii infections arise rapidly and are highly lethal. This form constitutes the precursor of the toxin: it enters into host cells and mediates autoprocessing to release the active toxin (Glucosyltransferase TcsL) into the host cytosol. Targets vascular endothelium by binding to the semaphorin proteins SEMA6A and SEMA6B, and enters host cells via clathrin-mediated endocytosis. Once entered into host cells, acidification in the endosome promotes the membrane insertion of the translocation region and formation of a pore, leading to translocation of the GT44 and peptidase C80 domains across the endosomal membrane. This activates the peptidase C80 domain and autocatalytic processing, releasing the N-terminal part (Glucosyltransferase TcsL), which constitutes the active part of the toxin, in the cytosol. Active form of the toxin, which is released into the host cytosol following autoprocessing and inactivates small GTPases. Acts by mediating monoglucosylation of small GTPases of the Ras (H-Ras/HRAS, K-Ras/KRAS and N-Ras/NRAS) family in host cells at the conserved threonine residue located in the switch I region ('Thr-37/35'), using UDP-alpha-D-glucose as the sugar donor. Also able to catalyze monoglucosylation of some members of the Rho family (Rac1 and Rap2A), but with less efficiency than with Ras proteins. Monoglucosylation of host small GTPases completely prevents the recognition of the downstream effector, blocking the GTPases in their inactive form and leading to apoptosis. Induces an anti-inflammatory effect, mainly by inactivating Ras proteins which results in blockage of the cell cycle and killing of immune cells. The absence or moderate local inflammatory response allows C.sordellii spreading in deep tissues, production of toxin which is released in the general circulation and causes a toxic shock syndrome. The protein is Cytotoxin-L of Paraclostridium sordellii (strain ATCC 9714 / DSM 2141 / JCM 3814 / LMG 15708 / NCIMB 10717 / 211) (Clostridium sordellii).